Reading from the N-terminus, the 340-residue chain is Ketol-acid reductoisomerase (NADP(+)) (340 aa).

Residues 3–183 (INVYYDKDCD…GGGRTGIIET (181 aa)) form the KARI N-terminal Rossmann domain. Residues 26 to 29 (FGSQ), S54, and 84 to 87 (DELQ) contribute to the NADP(+) site. H109 is a catalytic residue. G135 is a binding site for NADP(+). The KARI C-terminal knotted domain occupies 184-329 (TFKDETETDL…KKLRAMMPWI (146 aa)). Residues D192, E196, E228, and E232 each contribute to the Mg(2+) site. S253 provides a ligand contact to substrate.

Belongs to the ketol-acid reductoisomerase family. Mg(2+) is required as a cofactor.

The catalysed reaction is (2R)-2,3-dihydroxy-3-methylbutanoate + NADP(+) = (2S)-2-acetolactate + NADPH + H(+). It catalyses the reaction (2R,3R)-2,3-dihydroxy-3-methylpentanoate + NADP(+) = (S)-2-ethyl-2-hydroxy-3-oxobutanoate + NADPH + H(+). The protein operates within amino-acid biosynthesis; L-isoleucine biosynthesis; L-isoleucine from 2-oxobutanoate: step 2/4. It participates in amino-acid biosynthesis; L-valine biosynthesis; L-valine from pyruvate: step 2/4. Involved in the biosynthesis of branched-chain amino acids (BCAA). Catalyzes an alkyl-migration followed by a ketol-acid reduction of (S)-2-acetolactate (S2AL) to yield (R)-2,3-dihydroxy-isovalerate. In the isomerase reaction, S2AL is rearranged via a Mg-dependent methyl migration to produce 3-hydroxy-3-methyl-2-ketobutyrate (HMKB). In the reductase reaction, this 2-ketoacid undergoes a metal-dependent reduction by NADPH to yield (R)-2,3-dihydroxy-isovalerate. This chain is Ketol-acid reductoisomerase (NADP(+)), found in Campylobacter concisus (strain 13826).